The following is a 420-amino-acid chain: Tyrosine-protein phosphatase non-receptor type 20 (420 aa).

Residues 1–11 (MSSPRDFRAEP) are compositionally biased toward basic and acidic residues. 2 disordered regions span residues 1–47 (MSSP…VFEN) and 68–108 (DVFE…SQAL). The segment covering 31–41 (LPSSSQENTPR) has biased composition (polar residues). Phosphoserine occurs at positions 76 and 120. Positions 159 to 412 (IMQEFMALEL…HFCYDIVLEV (254 aa)) constitute a Tyrosine-protein phosphatase domain. Substrate contacts are provided by residues aspartate 323, 353–359 (CSAGIGR), and glutamine 397. The active-site Phosphocysteine intermediate is cysteine 353.

It belongs to the protein-tyrosine phosphatase family. Non-receptor class subfamily. As to expression, present in many cell lines (at protein level). Widely expressed.

The protein localises to the nucleus. It localises to the cytoplasm. Its subcellular location is the cytoskeleton. The protein resides in the microtubule organizing center. It is found in the centrosome. The enzyme catalyses O-phospho-L-tyrosyl-[protein] + H2O = L-tyrosyl-[protein] + phosphate. In terms of biological role, tyrosine-protein phosphatase targeted to sites of actin polymerization in response of varied extracellular stimuli. Has tyrosine phosphatase activity towards various tyrosyl phosphorylated substrates. The chain is Tyrosine-protein phosphatase non-receptor type 20 from Homo sapiens (Human).